Reading from the N-terminus, the 492-residue chain is Cytochrome P450 2B19 (492 aa).

Phosphoserine; by PKA is present on Ser-129. A heme-binding site is contributed by Cys-437.

The protein belongs to the cytochrome P450 family. Heme serves as cofactor. As to expression, expressed only in differentiated keratinocytes in skin.

It localises to the endoplasmic reticulum membrane. The protein resides in the microsome membrane. The enzyme catalyses an organic molecule + reduced [NADPH--hemoprotein reductase] + O2 = an alcohol + oxidized [NADPH--hemoprotein reductase] + H2O + H(+). Functionally, cytochromes P450 are a group of heme-thiolate monooxygenases. In liver microsomes, this enzyme is involved in an NADPH-dependent electron transport pathway. It oxidizes a variety of structurally unrelated compounds, including steroids, fatty acids, and xenobiotics. The chain is Cytochrome P450 2B19 (Cyp2b19) from Mus musculus (Mouse).